We begin with the raw amino-acid sequence, 156 residues long: Small ribosomal subunit protein uS7 (156 aa).

Belongs to the universal ribosomal protein uS7 family. As to quaternary structure, part of the 30S ribosomal subunit. Contacts proteins S9 and S11.

Functionally, one of the primary rRNA binding proteins, it binds directly to 16S rRNA where it nucleates assembly of the head domain of the 30S subunit. Is located at the subunit interface close to the decoding center, probably blocks exit of the E-site tRNA. The polypeptide is Small ribosomal subunit protein uS7 (Bacillus cytotoxicus (strain DSM 22905 / CIP 110041 / 391-98 / NVH 391-98)).